A 59-amino-acid polypeptide reads, in one-letter code: Conotoxin Sr5.4 (59 aa).

Positions 1–22 are cleaved as a signal peptide; sequence MRCLPVFVILLLLIASAPSVDA. A propeptide spanning residues 23–44 is cleaved from the precursor; sequence QLKTKDDVPLASFHDNAKGTQH.

This sequence belongs to the conotoxin T superfamily. Post-translationally, contains 2 disulfide bonds that can be either 'C1-C3, C2-C4' or 'C1-C4, C2-C3', since these disulfide connectivities have been observed for conotoxins with cysteine framework V (for examples, see AC P0DQQ7 and AC P81755). As to expression, expressed by the venom duct.

It is found in the secreted. This is Conotoxin Sr5.4 from Conus spurius (Alphabet cone).